The chain runs to 141 residues: Nucleoside diphosphate kinase (141 aa).

ATP contacts are provided by Lys11, Phe59, Arg87, Thr93, Arg104, and Asn114. His117 functions as the Pros-phosphohistidine intermediate in the catalytic mechanism.

This sequence belongs to the NDK family. In terms of assembly, homotetramer. Mg(2+) serves as cofactor.

Its subcellular location is the cytoplasm. The catalysed reaction is a 2'-deoxyribonucleoside 5'-diphosphate + ATP = a 2'-deoxyribonucleoside 5'-triphosphate + ADP. The enzyme catalyses a ribonucleoside 5'-diphosphate + ATP = a ribonucleoside 5'-triphosphate + ADP. Major role in the synthesis of nucleoside triphosphates other than ATP. The ATP gamma phosphate is transferred to the NDP beta phosphate via a ping-pong mechanism, using a phosphorylated active-site intermediate. This chain is Nucleoside diphosphate kinase, found in Mannheimia succiniciproducens (strain KCTC 0769BP / MBEL55E).